A 232-amino-acid polypeptide reads, in one-letter code: Large ribosomal subunit protein uL1 (232 aa).

This sequence belongs to the universal ribosomal protein uL1 family. In terms of assembly, part of the 50S ribosomal subunit.

In terms of biological role, binds directly to 23S rRNA. The L1 stalk is quite mobile in the ribosome, and is involved in E site tRNA release. Protein L1 is also a translational repressor protein, it controls the translation of the L11 operon by binding to its mRNA. This is Large ribosomal subunit protein uL1 from Bacillus velezensis (strain DSM 23117 / BGSC 10A6 / LMG 26770 / FZB42) (Bacillus amyloliquefaciens subsp. plantarum).